Reading from the N-terminus, the 540-residue chain is Tyrosine-protein kinase transforming protein erbB (540 aa).

Positions 132–399 (FKKVKVLGFG…KMARDPPRYL (268 aa)) constitute a Protein kinase domain. Residues 138–146 (LGFGAFGTV) and lysine 165 contribute to the ATP site. Aspartate 257 functions as the Proton acceptor in the catalytic mechanism.

The protein belongs to the protein kinase superfamily. Tyr protein kinase family. EGF receptor subfamily.

It catalyses the reaction L-tyrosyl-[protein] + ATP = O-phospho-L-tyrosyl-[protein] + ADP + H(+). This chain is Tyrosine-protein kinase transforming protein erbB (V-ERBB), found in Avian erythroblastosis virus (strain ts167).